Reading from the N-terminus, the 386-residue chain is uncharacterized protein (386 aa).

It belongs to the mimivirus L17x/L18x family.

This is an uncharacterized protein from Acanthamoeba polyphaga mimivirus (APMV).